A 116-amino-acid polypeptide reads, in one-letter code: MTPLLTLFLVALIGLPLAQALDCHVCAYNGDNCFNPMRCPAMVAYCMTTRTYYTPTRMKVSKSCVPSCFETVYDGYSKHASTTSCCQYDLCNGAGFAAPATLALAPILLATLWGLL.

Residues 1–20 form the signal peptide; sequence MTPLLTLFLVALIGLPLAQA. Residues 21–105 form the UPAR/Ly6 domain; it reads LDCHVCAYNG…FAAPATLALA (85 aa). Intrachain disulfides connect cysteine 23–cysteine 46, cysteine 26–cysteine 33, cysteine 39–cysteine 64, cysteine 68–cysteine 85, and cysteine 86–cysteine 91. The GPI-anchor amidated asparagine moiety is linked to residue asparagine 92. A propeptide spans 93 to 116 (removed in mature form); sequence GAGFAAPATLALAPILLATLWGLL.

In terms of assembly, interacts with nAChRs containing alpha-4:beta-2 (CHRNA4:CHRNB2) and alpha-7 (CHRNA7) subunits. Interacts with CHRNA4 probably in the endoplasmic reticulum prior to nAChR pentameric assembly. Interacts with KCNA2/Potassium voltage-gated channel subfamily A member 2.

It is found in the cell membrane. The protein localises to the cell projection. The protein resides in the dendrite. It localises to the endoplasmic reticulum. Its function is as follows. Acts in different tissues through interaction to nicotinic acetylcholine receptors (nAChRs). The proposed role as modulator of nAChR activity seems to be dependent on the nAChR subtype and stoichiometry, and to involve an effect on nAChR trafficking and its cell surface expression, and on single channel properties of the nAChR inserted in the plasma membrane. Modulates functional properties of nicotinic acetylcholine receptors (nAChRs) to prevent excessive excitation, and hence neurodegeneration. Enhances desensitization by increasing both the rate and extent of desensitization of alpha-4:beta-2-containing nAChRs and slowing recovery from desensitization. Promotes large amplitude ACh-evoked currents through alpha-4:beta-2 nAChRs. Is involved in regulation of the nAChR pentameric assembly in the endoplasmic reticulum. Shifts stoichiometry from high sensitivity alpha-4(2):beta-2(3) to low sensitivity alpha-4(3):beta-2(2) nAChR. In vitro modulates alpha-3:beta-4-containing nAChRs. Reduces cell surface expression of (alpha-3:beta-4)(2):beta-4 and (alpha-3:beta-4)(2):alpha-5 nAChRs suggesting an interaction with nAChR alpha-3(-):(+)beta-4 subunit interfaces and an allosteric mode. Corresponding single channel effects characterized by decreased unitary conductance, altered burst proportions and enhanced desensitization/inactivation seem to depend on nAChR alpha:alpha subunit interfaces and are greater in (alpha-3:beta-2)(2):alpha-3 when compared to (alpha-3:beta-2)(2):alpha-5 nAChRs. Prevents plasticity in the primary visual cortex late in life. This chain is Ly-6/neurotoxin-like protein 1, found in Saimiri boliviensis boliviensis (Bolivian squirrel monkey).